Reading from the N-terminus, the 438-residue chain is Aspartic proteinase nepenthesin-2 (438 aa).

The first 24 residues, 1-24 (MASPLYSVVLGLAIVSAIVAPTSS), serve as a signal peptide directing secretion. Positions 25-79 (TSRGTLLHHGQKRPQPGLRVDLEQVDSGKNLTKYELIKRAIKRGERRMRSINAML) are cleaved as a propeptide — activation peptide. N-linked (GlcNAc...) asparagine glycosylation is present at Asn-54. A Peptidase A1 domain is found at 96–431 (YLMNVAIGTP…DLQNLAVSFV (336 aa)). Residue Asp-114 is part of the active site. 6 cysteine pairs are disulfide-bonded: Cys-124–Cys-127, Cys-130–Cys-204, Cys-151–Cys-169, Cys-156–Cys-164, Cys-241–Cys-435, and Cys-354–Cys-395. Asp-315 is a catalytic residue.

It belongs to the peptidase A1 family.

The protein localises to the secreted. It catalyses the reaction Similar to pepsin, but also cleaves on either side of Asp and at Lys-|-Arg.. Its activity is regulated as follows. Inhibited by pepstatin and by diazoacetyl-D,L-norleucine methyl ester (DAN) in the presence of Cu(2+) ions. Extracellular proteinase found in the pitcher fluid of carnivorous plants. Digest prey for nitrogen uptake. The polypeptide is Aspartic proteinase nepenthesin-2 (nep2) (Nepenthes gracilis (Slender pitcher plant)).